A 423-amino-acid polypeptide reads, in one-letter code: UDP-N-acetylglucosamine 1-carboxyvinyltransferase 1 (423 aa).

Residue Lys-23–Asn-24 participates in phosphoenolpyruvate binding. Arg-96 lines the UDP-N-acetyl-alpha-D-glucosamine pocket. Cys-120 functions as the Proton donor in the catalytic mechanism. Position 120 is a 2-(S-cysteinyl)pyruvic acid O-phosphothioketal (Cys-120). Residues Arg-125–Leu-129, Asp-309, and Val-331 each bind UDP-N-acetyl-alpha-D-glucosamine.

The protein belongs to the EPSP synthase family. MurA subfamily.

It localises to the cytoplasm. The catalysed reaction is phosphoenolpyruvate + UDP-N-acetyl-alpha-D-glucosamine = UDP-N-acetyl-3-O-(1-carboxyvinyl)-alpha-D-glucosamine + phosphate. The protein operates within cell wall biogenesis; peptidoglycan biosynthesis. In terms of biological role, cell wall formation. Adds enolpyruvyl to UDP-N-acetylglucosamine. In Streptococcus mutans serotype c (strain ATCC 700610 / UA159), this protein is UDP-N-acetylglucosamine 1-carboxyvinyltransferase 1.